Reading from the N-terminus, the 165-residue chain is Putative pre-16S rRNA nuclease (165 aa).

It belongs to the YqgF nuclease family.

It is found in the cytoplasm. Could be a nuclease involved in processing of the 5'-end of pre-16S rRNA. The chain is Putative pre-16S rRNA nuclease from Beijerinckia indica subsp. indica (strain ATCC 9039 / DSM 1715 / NCIMB 8712).